A 235-amino-acid polypeptide reads, in one-letter code: Enolase-phosphatase E1 (235 aa).

Residues Asp10 and Glu12 each coordinate Mg(2+). Substrate contacts are provided by residues Ser130–Ser131 and Lys169. Residue Asp194 participates in Mg(2+) binding.

This sequence belongs to the HAD-like hydrolase superfamily. MasA/MtnC family. As to quaternary structure, monomer. Mg(2+) serves as cofactor.

The protein resides in the cytoplasm. It is found in the nucleus. The catalysed reaction is 5-methylsulfanyl-2,3-dioxopentyl phosphate + H2O = 1,2-dihydroxy-5-(methylsulfanyl)pent-1-en-3-one + phosphate. Its pathway is amino-acid biosynthesis; L-methionine biosynthesis via salvage pathway; L-methionine from S-methyl-5-thio-alpha-D-ribose 1-phosphate: step 3/6. It participates in amino-acid biosynthesis; L-methionine biosynthesis via salvage pathway; L-methionine from S-methyl-5-thio-alpha-D-ribose 1-phosphate: step 4/6. In terms of biological role, bifunctional enzyme that catalyzes the enolization of 2,3-diketo-5-methylthiopentyl-1-phosphate (DK-MTP-1-P) into the intermediate 2-hydroxy-3-keto-5-methylthiopentenyl-1-phosphate (HK-MTPenyl-1-P), which is then dephosphorylated to form the acireductone 1,2-dihydroxy-3-keto-5-methylthiopentene (DHK-MTPene). The polypeptide is Enolase-phosphatase E1 (Komagataella phaffii (strain GS115 / ATCC 20864) (Yeast)).